The following is a 772-amino-acid chain: Protocadherin beta-6 (772 aa).

The signal sequence occupies residues 1–28 (METTLAKTPEKRQVVFLAILLLLWEAGS). Cadherin domains are found at residues 31 to 133 (IRYS…SPEF), 134 to 242 (PDTE…APEF), 243 to 346 (VQSL…APKL), 347 to 450 (TISS…APAF), and 451 to 560 (TQTS…APFI). Over 31 to 690 (IRYSIPEETE…QDEDMLTLYL (660 aa)) the chain is Extracellular. A disulfide bond links cysteine 96 and cysteine 102. An N-linked (GlcNAc...) asparagine glycan is attached at asparagine 169. O-linked (Man) serine glycosylation occurs at serine 223. O-linked (Man) threonine glycosylation occurs at threonine 225. A glycan (N-linked (GlcNAc...) asparagine) is linked at asparagine 417. The N-linked (GlcNAc...) asparagine glycan is linked to asparagine 566. A Cadherin 6 domain is found at 575–675 (LPRAAEPGYL…SQPYLPLPEV (101 aa)). Residues 691–711 (VIALASVSSLFLLSVLLFVGV) traverse the membrane as a helical segment. Residues 712–772 (RLCRRVREAS…DFKFLNHYSQ (61 aa)) are Cytoplasmic-facing.

Forms homodimers in trans (molecules expressed by two different cells). Forms promiscuous heterodimers in cis (at the plasma membrane of the same cell) with other protocadherins.

It localises to the cell membrane. Its function is as follows. Calcium-dependent cell-adhesion protein involved in cells self-recognition and non-self discrimination. Thereby, it is involved in the establishment and maintenance of specific neuronal connections in the brain. The protein is Protocadherin beta-6 of Mus musculus (Mouse).